Consider the following 239-residue polypeptide: Ribonuclease HII (239 aa).

The region spanning glycine 30 to glycine 221 is the RNase H type-2 domain. The a divalent metal cation site is built by aspartate 36, glutamate 37, and aspartate 130. The tract at residues threonine 217–glycine 239 is disordered. The span at alanine 225–glycine 239 shows a compositional bias: basic and acidic residues.

It belongs to the RNase HII family. The cofactor is Mn(2+). Mg(2+) serves as cofactor.

It is found in the cytoplasm. It carries out the reaction Endonucleolytic cleavage to 5'-phosphomonoester.. In terms of biological role, endonuclease that specifically degrades the RNA of RNA-DNA hybrids. In Mycobacterium ulcerans (strain Agy99), this protein is Ribonuclease HII.